The following is a 292-amino-acid chain: Troponin I (292 aa).

The residue at position 1 (Ser-1) is an N-acetylserine. Residues Ser-1–Lys-149 form a disordered region. Residues Tyr-46–Asp-55 are compositionally biased toward low complexity. Over residues Ala-58 to Lys-134 the composition is skewed to basic and acidic residues. Residues Asp-237–Val-250 form an actin-binding region. Positions Ser-255–Glu-292 are disordered.

The protein belongs to the troponin I family.

Its function is as follows. Troponin I is the inhibitory subunit of troponin, the thin filament regulatory complex which confers calcium-sensitivity to striated muscle actomyosin ATPase activity. The sequence is that of Troponin I from Chlamys nipponensis akazara (Akazara scallop).